A 497-amino-acid chain; its full sequence is Glutamyl-tRNA reductase (497 aa).

Substrate contacts are provided by residues 58-61 (TCNR), Ser118, 123-125 (EQQ), and Gln129. The active-site Nucleophile is the Cys59. Residue 214 to 219 (GAGAMA) coordinates NADP(+). Residues 461-477 (VTQPGQADSSAAQTAGT) are compositionally biased toward polar residues. Positions 461–486 (VTQPGQADSSAAQTAGTSARADQIPS) are disordered.

Belongs to the glutamyl-tRNA reductase family. Homodimer.

It catalyses the reaction (S)-4-amino-5-oxopentanoate + tRNA(Glu) + NADP(+) = L-glutamyl-tRNA(Glu) + NADPH + H(+). Its pathway is porphyrin-containing compound metabolism; protoporphyrin-IX biosynthesis; 5-aminolevulinate from L-glutamyl-tRNA(Glu): step 1/2. In terms of biological role, catalyzes the NADPH-dependent reduction of glutamyl-tRNA(Glu) to glutamate 1-semialdehyde (GSA). The protein is Glutamyl-tRNA reductase of Corynebacterium jeikeium (strain K411).